A 453-amino-acid polypeptide reads, in one-letter code: Glutamyl-tRNA(Gln) amidotransferase subunit A (453 aa).

Active-site charge relay system residues include Lys-53 and Ser-128. Residue Ser-152 is the Acyl-ester intermediate of the active site.

The protein belongs to the amidase family. GatA subfamily. In terms of assembly, heterotrimer of A, B and C subunits.

The enzyme catalyses L-glutamyl-tRNA(Gln) + L-glutamine + ATP + H2O = L-glutaminyl-tRNA(Gln) + L-glutamate + ADP + phosphate + H(+). Allows the formation of correctly charged Gln-tRNA(Gln) through the transamidation of misacylated Glu-tRNA(Gln) in organisms which lack glutaminyl-tRNA synthetase. The reaction takes place in the presence of glutamine and ATP through an activated gamma-phospho-Glu-tRNA(Gln). This is Glutamyl-tRNA(Gln) amidotransferase subunit A from Helicobacter pylori (strain P12).